We begin with the raw amino-acid sequence, 179 residues long: MENFNQIFTLLAENEGIGLNTDILETGIINIAALVGILIYAGRDFLGSFLEQRKTSIVQGVQDAEGRLEEANRRLSEAQKQLSQAHIVISEIKNETISAKKVLLESDAYQAKKDLTTRFSRALATFRSKERQIFLEVKEQIILLVLKRTVARAQQTFGPKERATALITETINKLEGDLL.

Residues 28–46 form a helical membrane-spanning segment; that stretch reads IINIAALVGILIYAGRDFL.

The protein belongs to the ATPase B chain family. As to quaternary structure, F-type ATPases have 2 components, F(1) - the catalytic core - and F(0) - the membrane proton channel. F(1) has five subunits: alpha(3), beta(3), gamma(1), delta(1), epsilon(1). F(0) has four main subunits: a(1), b(1), b'(1) and c(10-14). The alpha and beta chains form an alternating ring which encloses part of the gamma chain. F(1) is attached to F(0) by a central stalk formed by the gamma and epsilon chains, while a peripheral stalk is formed by the delta, b and b' chains.

The protein localises to the plastid. It localises to the chloroplast thylakoid membrane. In terms of biological role, f(1)F(0) ATP synthase produces ATP from ADP in the presence of a proton or sodium gradient. F-type ATPases consist of two structural domains, F(1) containing the extramembraneous catalytic core and F(0) containing the membrane proton channel, linked together by a central stalk and a peripheral stalk. During catalysis, ATP synthesis in the catalytic domain of F(1) is coupled via a rotary mechanism of the central stalk subunits to proton translocation. Functionally, component of the F(0) channel, it forms part of the peripheral stalk, linking F(1) to F(0). The chain is ATP synthase subunit b, chloroplastic from Trieres chinensis (Marine centric diatom).